We begin with the raw amino-acid sequence, 372 residues long: MKYDLIIIGSGSVGAAAGYYATRAGLNVLMTDAHMPPHQHGSHHGDTRLIRHAYGEGEKYVPLVLRAQTLWDELSRHNEEDPIFVRSGVINLGPADSTFLANVAHSAEQWQLNVEKLDAQGIMARWPEIRVPDNYIGLFETDSGFLRSELAIKTWIQLAKEAGCAQLFNCPVTAIRHDDDGVTIETADGDYQAKKAIVCAGTWVKDLLPELPVQPVRKVFAWYQADGRYSVKNKFPAFTGELPNGDQYYGFPAENDALKIGKHNGGQVIHSADERVPFAEVASDGSEAFPFLRNVLPGIGCCLYGAACTYDNSPDEDFIIDTLPGHDNTLLITGLSGHGFKFASVLGEIAADFAQDKKSDFDLTPFRLSRFQ.

4–34 (DLIIIGSGSVGAAAGYYATRAGLNVLMTDAH) serves as a coordination point for FAD. Cysteine 308 carries the post-translational modification S-8alpha-FAD cysteine.

It belongs to the MSOX/MTOX family. MTOX subfamily. As to quaternary structure, monomer. The cofactor is FAD.

It carries out the reaction N(alpha)-methyl-L-tryptophan + O2 + H2O = L-tryptophan + formaldehyde + H2O2. Functionally, catalyzes the oxidative demethylation of N-methyl-L-tryptophan. The polypeptide is N-methyl-L-tryptophan oxidase (Escherichia coli O17:K52:H18 (strain UMN026 / ExPEC)).